Here is a 264-residue protein sequence, read N- to C-terminus: Teichoic acids export ATP-binding protein TagH (264 aa).

Positions 5 to 243 constitute an ABC transporter domain; the sequence is VNIKNVTKEY…YEAFLNDFKK (239 aa). 57–64 lines the ATP pocket; the sequence is GINGSGKS.

Belongs to the ABC transporter superfamily. Teichoic acids exporter (TC 3.A.1.104.1) family. The complex is composed of two ATP-binding proteins (TagH) and two transmembrane proteins (TagG).

It localises to the cell membrane. The catalysed reaction is ATP + H2O + teichoic acidSide 1 = ADP + phosphate + teichoic acidSide 2.. Its function is as follows. Part of the ABC transporter complex TagGH involved in teichoic acids export. Responsible for energy coupling to the transport system. The sequence is that of Teichoic acids export ATP-binding protein TagH from Staphylococcus aureus (strain USA300).